The sequence spans 235 residues: Probable tetraspanin tspA (235 aa).

Topologically, residues 1–18 are cytoplasmic; the sequence is MVDTSNLLPQTPRLLKVP. The helical transmembrane segment at 19 to 39 threads the bilayer; the sequence is LIILNIILWILGLVLVIVGGI. Topologically, residues 40–68 are extracellular; the sequence is CVSFLSNFKDFTKASDAKSALSNLTTSIP. The N-linked (GlcNAc...) asparagine glycan is linked to Asn-62. A helical transmembrane segment spans residues 69–89; that stretch reads AGVLVIGILFVIFTVVGCFVA. Topologically, residues 90–93 are cytoplasmic; that stretch reads YKEK. The chain crosses the membrane as a helical span at residues 94-114; that stretch reads LVGLVIYCAVMLILLVILIGV. Topologically, residues 115–200 are extracellular; it reads GGKAITLHND…FSSKIYAVGA (86 aa). Asn-139, Asn-143, and Asn-160 each carry an N-linked (GlcNAc...) asparagine glycan. Residues 201-221 traverse the membrane as a helical segment; it reads AGLAIGIIELVAILFSLFLII. Residues 222–235 are Cytoplasmic-facing; it reads RICRSPRTRSYDQY.

Belongs to the tetraspanin (TM4SF) family.

The protein localises to the membrane. The polypeptide is Probable tetraspanin tspA (tspA) (Dictyostelium discoideum (Social amoeba)).